The chain runs to 685 residues: Multisite-specific tRNA:(cytosine-C(5))-methyltransferase trm4b (685 aa).

Residues C167 to K173, D208, D235, and D270 each bind S-adenosyl-L-methionine. C323 serves as the catalytic Nucleophile.

It belongs to the class I-like SAM-binding methyltransferase superfamily. RsmB/NOP family. TRM4 subfamily.

It is found in the nucleus. It catalyses the reaction cytidine(49) in tRNA precursor + S-adenosyl-L-methionine = 5-methylcytidine(49) in tRNA precursor + S-adenosyl-L-homocysteine + H(+). The enzyme catalyses cytidine(50) in tRNA + S-adenosyl-L-methionine = 5-methylcytidine(50) in tRNA + S-adenosyl-L-homocysteine + H(+). The catalysed reaction is cytidine(60) in tRNA(Asp) + S-adenosyl-L-methionine = 5-methylcytidine(60) in tRNA(Asp) + S-adenosyl-L-homocysteine + H(+). It carries out the reaction cytidine(61) in tRNA(Asp) + S-adenosyl-L-methionine = 5-methylcytidine(61) in tRNA(Asp) + S-adenosyl-L-homocysteine + H(+). It catalyses the reaction cytidine(62) in tRNA(Asp) + S-adenosyl-L-methionine = 5-methylcytidine(62) in tRNA(Asp) + S-adenosyl-L-homocysteine + H(+). TRNA cytosine C(5)-methyltransferase that methylates cytosine to 5-methylcytosine (m5C) in tRNAs at position 49 and 50. Trm4a and trm4b methylate different sets of tRNAs. Also methylates cytosine to m5C at positions (60, 61 and 62) in tRNA(Asp). The protein is Multisite-specific tRNA:(cytosine-C(5))-methyltransferase trm4b of Schizosaccharomyces pombe (strain 972 / ATCC 24843) (Fission yeast).